The chain runs to 420 residues: Dachshund homolog dac-1 (420 aa).

The tract at residues 23-77 (PSSSSSSSNNSSSNTSSSNFLSPYEYQESSTSPRDTTDSSGESSLSSSGSSSSLN) is disordered. Composition is skewed to low complexity over residues 24 to 41 (SSSS…SSSN) and 51 to 77 (SSTS…SSLN). The segment at 85 to 171 (KLIKFRGHNV…LLKTSDFEKL (87 aa)) is DACHbox-N. Residues 242–258 (NSFERADDDDQNQRDAD) show a composition bias toward basic and acidic residues. Positions 242-321 (NSFERADDDD…SSSSSGKNDE (80 aa)) are disordered. Residues 263–273 (LNLSKSGGNSE) are compositionally biased toward polar residues. Over residues 297–317 (GGSNSNSLSMSMEAGSSSSSG) the composition is skewed to low complexity.

The protein belongs to the DACH/dachshund family. In terms of tissue distribution, expressed in AFD, AWC, ASE and ASK neurons. Expressed in the alae.

The protein localises to the nucleus. In terms of biological role, transcription factor. Plays a role in the thermotactic response. This chain is Dachshund homolog dac-1, found in Caenorhabditis elegans.